We begin with the raw amino-acid sequence, 698 residues long: Sucrose non-fermenting protein kinase 1 (698 aa).

Positions 1–48 are disordered; that stretch reads MAPRGFEDEELTISLSSSHVRRPQQQQPPPPTQQQHAHQPGSRPADAP. A Protein kinase domain is found at 62–313; sequence YKVLRTLGEG…IEDIRADPWF (252 aa). Residues 68–76 and Lys91 each bind ATP; that span reads LGEGSFGKV. Asp184 acts as the Proton acceptor in catalysis. The auto-inhibitory domain (AID) stretch occupies residues 320-417; the sequence is YLQLPVEEFF…ALLEPEGSSP (98 aa). Positions 360-397 constitute a UBA domain; that stretch reads VTEKISKTMGYGKNDVEEALQASEPSAIKDAYMIVREN. 3 disordered regions span residues 410–435, 482–525, and 564–597; these read LEPE…TTTA, TRTD…KKTK, and ESRH…IDPM. Over residues 415 to 435 the composition is skewed to low complexity; that stretch reads SSPMLSMSSARSATSTTTTTA. Basic and acidic residues-rich tracts occupy residues 484–493 and 564–573; these read TDAEKEETSR and ESRHAEERAE.

The protein belongs to the protein kinase superfamily. CAMK Ser/Thr protein kinase family. SNF1 subfamily. Component of the AMP-activated protein kinase complex also known as the SNF1 kinase complex (Snf1c), a heterotrimeric complex composed of a catalytic subunit alpha and 2 regulatory subunits beta and gamma.

The protein resides in the cytoplasm. It is found in the nucleus. The enzyme catalyses L-seryl-[protein] + ATP = O-phospho-L-seryl-[protein] + ADP + H(+). The catalysed reaction is L-threonyl-[protein] + ATP = O-phospho-L-threonyl-[protein] + ADP + H(+). Functionally, catalytic subunit of the AMP-activated protein kinase complex also known as the SNF1 kinase complex (Snf1c), a central regulator of cellular energy homeostasis, which, in response to a fall in intracellular ATP levels, activates energy-producing pathways and inhibits energy-consuming processes. The complex phosphorylates histone H3 to form H3S10ph, which promotes H3K14ac formation, leading to transcriptional activation through TBP recruitment to the promoters. Activates the expression of the galactose oxidase (GOA) gene and of several cell wall-degrading enzymes (CWDEs) such as pectate lyase, xylanase and glucanase. Plays an important role in sudden death syndrome (SDS) by controlling the colonization of the infected roots. This Fusarium virguliforme protein is Sucrose non-fermenting protein kinase 1.